The following is a 123-amino-acid chain: Alpha-lactalbumin B/C (123 aa).

In terms of domain architecture, C-type lysozyme spans 1–123 (KQFTKCQLSQ…KLEQWLCEEL (123 aa)). Cystine bridges form between Cys6–Cys120, Cys28–Cys111, Cys61–Cys77, and Cys73–Cys91. Ca(2+) is bound by residues Lys79, Asp82, Asp84, Asp87, and Asp88.

The protein belongs to the glycosyl hydrolase 22 family. As to quaternary structure, lactose synthase (LS) is a heterodimer of a catalytic component, beta1,4-galactosyltransferase (beta4Gal-T1) and a regulatory component, alpha-lactalbumin (LA). In terms of tissue distribution, mammary gland specific. Secreted in milk.

The protein resides in the secreted. In terms of biological role, regulatory subunit of lactose synthase, changes the substrate specificity of galactosyltransferase in the mammary gland making glucose a good acceptor substrate for this enzyme. This enables LS to synthesize lactose, the major carbohydrate component of milk. In other tissues, galactosyltransferase transfers galactose onto the N-acetylglucosamine of the oligosaccharide chains in glycoproteins. This Equus caballus (Horse) protein is Alpha-lactalbumin B/C.